We begin with the raw amino-acid sequence, 463 residues long: Probable mannan endo-1,4-beta-mannosidase F (463 aa).

The first 18 residues, 1-18 (MRSLSSIALLSVVGAASA), serve as a signal peptide directing secretion. One can recognise a CBM1 domain in the interval 19-54 (QAGPWAQCGGKSFSGSSECASGWKCQELNEWFSQCV). Residues 57–78 (AESTTPTVSSTPTPTDAPSVSI) are disordered. Low complexity predominate over residues 59–77 (STTPTVSSTPTPTDAPSVS). Residues 75 to 118 (SVSITASATTGINKSISVSSASKSTPLPSSSSASPSPRPTGSGS) form a ser-rich linker region. N-linked (GlcNAc...) asparagine glycosylation is present at Asn-87. Residues 93-118 (SSASKSTPLPSSSSASPSPRPTGSGS) are compositionally biased toward low complexity. A disordered region spans residues 93 to 121 (SSASKSTPLPSSSSASPSPRPTGSGSFAK). The interval 119–463 (FAKADGLQFS…MDHMENVNKN (345 aa)) is catalytic. The substrate site is built by Trp-171 and Asn-285. The active-site Proton donor is Glu-286. Tyr-361 is a substrate binding site. Residue Glu-395 is the Nucleophile of the active site. Position 424 (Trp-424) interacts with substrate.

The protein belongs to the glycosyl hydrolase 5 (cellulase A) family.

The protein resides in the secreted. The catalysed reaction is Random hydrolysis of (1-&gt;4)-beta-D-mannosidic linkages in mannans, galactomannans and glucomannans.. Functionally, endo-1,4-mannanase, a crucial enzyme for depolymerization of seed galactomannans and wood galactoglucomannans. The polypeptide is Probable mannan endo-1,4-beta-mannosidase F (manF) (Aspergillus flavus (strain ATCC 200026 / FGSC A1120 / IAM 13836 / NRRL 3357 / JCM 12722 / SRRC 167)).